Consider the following 399-residue polypeptide: MAIPALEPQLHDADTSSNNMSSNSTDSGYDTNSTTPLEKSEKPNTQELKQQQLDPKRPPFVRVPDLFGSIMSTKPVVNPNYFAAKARGDRWIARVMNFNKAVAARNSKVDLCFLASMWAPDAPEDRLVMMLDWNHWVFLFDDQFDEGHLKEDPAAAAEEVKQTIAIMGGNAPRYTAESNPIRYVFQQCWDRLKAVSSQEMQQRWIDQHKRYFDQLLVQVDQQVGGENFTRDVEAYMDLRRGTIGVYPAISLSEYGAGVNVPQHVYDHPSLQECMKVSADLVTLVNDVLSYRKDLELGVDHNLMSLLMQRDNLSAQQAVDVIGDMVNECYRRWYLALAELPSYGEKIDYNVMKFVEICRAVAQGNLYWSFQTGRYLGPEGHEVHETGIMYLPPAANLVVA.

Residues methionine 1–phenylalanine 60 are disordered. Low complexity predominate over residues threonine 15–serine 27. Positions glycine 28–leucine 37 are enriched in polar residues. Aspartate 141, asparagine 285, and serine 289 together coordinate Mg(2+). The DDXXD motif signature appears at aspartate 141–aspartate 145. Arginine 373 and tyrosine 374 together coordinate (2E,6E)-farnesyl diphosphate.

This sequence belongs to the terpene synthase family. Requires Mg(2+) as cofactor.

The enzyme catalyses (2E,6E)-farnesyl diphosphate + H2O = presilphiperfolan-8beta-ol + diphosphate. It functions in the pathway secondary metabolite biosynthesis. In terms of biological role, presilphiperfolan-8-beta-ol synthase; part of the gene cluster that mediates the biosynthesis of botrydial. Botrydial is necessary for colonization of plant tissue by the T4 strain. It is a strain-dependent virulence factor since highly aggressive strains like SAS56 or B05 still retain substantial virulence when botrydial synthesis is impaired, since they produce also botcinic acid. The first step of botrydial biosynthesis is performed by the sesquiterpene synthase BOT2 which catalyzes the cyclization of farnesyl diphosphate (FPP) to presilphiperfolan-8-beta-ol (PSP). The cytochrome P450 monooxygenase BOT4 then catalyzes the hydroxylation at C-4 to give a probotryane intermediate. Acetylation of the hydroxyl at C-4 is carried out by the acetyltransferase BOT5, followed by the combined action of the P450 monooxygenases BOT3 and BOT1, to yield finally the glycol, via the regio- and stereospecific hydroxylations at C-10 and C-15 of the probotryane intermediates, respectively. The cleavage of the C10-C15 bond of probotryane skeleton is an intriguing and chemically important reaction, which could be mediated by some of the monooxygenases or by a combination of them. It is possible that either BOT3 or BOT1 would oxidize either the 10- or the 15-hydroxy group to the hydroperoxide derivative, which would then undergo heterolytic fragmentation to give the dialdehyde botrydial. Finally, the dehydrogenase BOT7 might be involved in the conversion of botrydial to dihydrobotrydial. In Botryotinia fuckeliana (Noble rot fungus), this protein is Presilphiperfolan-8-beta-ol synthase (BOT2).